The primary structure comprises 1093 residues: Atos homolog protein A (1093 aa).

Residues 29–37 (ALLITEGRT) form a transactivation domain 1 (TAD1) region. Disordered stretches follow at residues 396-479 (AGRP…GNPL), 558-579 (SSKS…GESK), and 746-788 (HDNF…GSMR). A compositionally biased stretch (basic and acidic residues) spans 746–763 (HDNFKNKNRQDKTKAAHD). The tract at residues 895 to 952 (LLGNFEESVLNFRLDPLGIVEGFTAEVGASGVFCPTHMTLPVEVSFYSVSDDNAPSPY) is required for macropage invasion. The tract at residues 979–987 (FNPNKTVVK) is transactivation domain 2 (TAD2).

This sequence belongs to the ATOS family.

It is found in the nucleus. Functionally, transcription regulator that syncronizes transcriptional and translational programs to promote macrophage invasion of tissues. The chain is Atos homolog protein A (ATOSA) from Gallus gallus (Chicken).